A 158-amino-acid chain; its full sequence is Large ribosomal subunit protein uL15 (158 aa).

Over residues methionine 1–threonine 13 the composition is skewed to basic and acidic residues. Residues methionine 1–alanine 45 are disordered. A compositionally biased stretch (gly residues) spans arginine 21–valine 35.

It belongs to the universal ribosomal protein uL15 family. In terms of assembly, part of the 50S ribosomal subunit.

Binds to the 23S rRNA. The chain is Large ribosomal subunit protein uL15 from Rhizobium leguminosarum bv. trifolii (strain WSM2304).